A 451-amino-acid polypeptide reads, in one-letter code: UDP-glycosyltransferase 76E11 (451 aa).

UDP-alpha-D-glucose contacts are provided by residues serine 273, 332-334 (APQ), 349-357 (HCGWNSTLE), and 371-374 (SSDQ).

This sequence belongs to the UDP-glycosyltransferase family.

Its function is as follows. Possesses low quercetin 3-O-glucosyltransferase and 7-O-glucosyltransferase activities in vitro. This Arabidopsis thaliana (Mouse-ear cress) protein is UDP-glycosyltransferase 76E11 (UGT76E11).